The chain runs to 508 residues: Erythropoietin receptor (508 aa).

The N-terminal stretch at 1–24 is a signal peptide; sequence MDHLGASLWPQVGSLCLLLAGAAW. Topologically, residues 25–250 are extracellular; the sequence is APPPNLPDPK…SLLTPSDLDP (226 aa). Cys52 and Cys62 are oxidised to a cystine. Residue Asn76 is glycosylated (N-linked (GlcNAc...) asparagine). Residues Cys91 and Cys107 are joined by a disulfide bond. A Fibronectin type-III domain is found at 147–247; the sequence is APVGLVARLA…EPVSLLTPSD (101 aa). The WSXWS motif motif lies at 233-237; it reads WSAWS. The chain crosses the membrane as a helical span at residues 251-273; that stretch reads LILTLSLILVVILVLLTVLALLS. The Cytoplasmic segment spans residues 274–508; sequence HRRALKQKIW…PLPPSYVACS (235 aa). Lys281 participates in a covalent cross-link: Glycyl lysine isopeptide (Lys-Gly) (interchain with G-Cter in ubiquitin). The short motif at 282–290 is the Box 1 motif element; sequence IWPGIPSPE. Tyr368 and Tyr426 each carry phosphotyrosine; by JAK2. The ITIM motif signature appears at 452 to 457; sequence LKYLYL. Lys453 participates in a covalent cross-link: Glycyl lysine isopeptide (Lys-Gly) (interchain with G-Cter in ubiquitin). A phosphotyrosine; by JAK2 mark is found at Tyr454, Tyr456, Tyr468, Tyr485, Tyr489, and Tyr504. A required for high-affinity SOCS3 binding region spans residues 454 to 456; it reads YLY. The interval 467 to 494 is disordered; that stretch reads DYSSGDSQGAQGGLSDGPYSNPYENSLI.

Belongs to the type I cytokine receptor family. Type 1 subfamily. Forms homodimers on EPO stimulation. The tyrosine-phosphorylated form interacts with several SH2 domain-containing proteins including LYN, the adapter protein SH2B2, PTPN6, PTPN11, JAK2, PI3 kinases, STAT5A/B, SOCS3, CRKL. Interacts with INPP5D/SHIP1. SH2B2 binding inhibits the JAK-STAT signaling. Interacts with RHEX; this interaction occurs in a erythropoietin (EPO)-dependent manner. Interacts with ATXN2L. On EPO stimulation, phosphorylated on C-terminal tyrosine residues by JAK2. The phosphotyrosine motifs are also recruitment sites for several SH2-containing proteins and adapter proteins which mediate cell proliferation. Phosphorylation on Tyr-454 is required for PTPN6 interaction, Tyr-426 for PTPN11. Tyr-426 is also required for SOCS3 binding, but Tyr-454/Tyr-456 motif is the preferred binding site. In terms of processing, ubiquitinated by the ECS(SOCS2) complex following ligand-binding and phosphorylation by JAK2, leading to its degradation by the proteasome. Regulation by the ECS(SOCS2) complex acts as a negative feedback loop of erythropoietin-mediated signaling pathway. Ubiquitination at Lys-281 mediates receptor internalization, whereas ubiquitination at Lys-453 promotes trafficking of activated receptors to the lysosomes for degradation. Ubiquitinated by NOSIP; appears to be either multi-monoubiquitinated or polyubiquitinated. Ubiquitination mediates proliferation and survival of EPO-dependent cells. In terms of tissue distribution, erythroid cells and erythroid progenitor cells. Isoform EPOR-F is the most abundant form in EPO-dependent erythroleukemia cells and in late-stage erythroid progenitors. As to expression, isoform EPOR-S and isoform EPOR-T are the predominant forms in bone marrow. In terms of tissue distribution, isoform EPOR-S and isoform EPOR-T are the predominant forms in bone marrow. Isoform EPOR-T is the most abundant from in early-stage erythroid progenitor cells.

The protein localises to the cell membrane. The protein resides in the secreted. Its function is as follows. Receptor for erythropoietin, which mediates erythropoietin-induced erythroblast proliferation and differentiation. Upon EPO stimulation, EPOR dimerizes triggering the JAK2/STAT5 signaling cascade. In some cell types, can also activate STAT1 and STAT3. May also activate the LYN tyrosine kinase. Functionally, acts as a dominant-negative receptor of EPOR-mediated signaling. This Homo sapiens (Human) protein is Erythropoietin receptor.